The sequence spans 155 residues: MAEGEITTFTALTEKFNLPPGNYKKPKLLYCSNGGHFLRILPDGTVDGTRDRSDQHIQLQLSAESVGEVYIKSTETGQYLAMDTDGLLYGSQTPNEECLFLERLEENHYNTYISKKHAEKNWFVGLKKNGSCKRGPRTHYGQKAILFLPLPVSSD.

A2 bears the N-acetylalanine mark. Residues 2-15 (AEGEITTFTALTEK) constitute a propeptide that is removed on maturation. A Nuclear localization signal motif is present at residues 24–27 (KKPK). N33 serves as a coordination point for heparin. A heparin-binding region spans residues 127–143 (KKNGSCKRGPRTHYGQK).

This sequence belongs to the heparin-binding growth factors family. Monomer. Homodimer. Interacts with FGFR1, FGFR2, FGFR3 and FGFR4. Affinity between fibroblast growth factors (FGFs) and their receptors is increased by heparan sulfate glycosaminoglycans that function as coreceptors. Found in a complex with FGFBP1, FGF1 and FGF2. Interacts with FGFBP1. Part of a Cu(2+)-dependent multiprotein aggregate containing FGF1, S100A13 and SYT1. Interacts with SYT1. Interacts with S100A13. Interacts with LRRC59. Interacts with CSNKA, CSNKB and FIBP. While binding with LRRC59, CSNKA and FIBP seem mutually exclusive, CSNKB and FIBP may cooperatively interact with FGF1. Forms a ternary complex with FGFR1 and ITGAV:ITGB3 and induces the recruitment of PTPN11 to the complex. In terms of processing, in the nucleus, phosphorylated by PKC/PRKCD. In terms of tissue distribution, predominantly expressed in kidney and brain. Detected at much lower levels in heart and skeletal muscle.

The protein localises to the secreted. Its subcellular location is the cytoplasm. The protein resides in the cell cortex. It is found in the cytosol. It localises to the nucleus. In terms of biological role, plays an important role in the regulation of cell survival, cell division, angiogenesis, cell differentiation and cell migration. Functions as a potent mitogen in vitro. Acts as a ligand for FGFR1 and integrins. Binds to FGFR1 in the presence of heparin leading to FGFR1 dimerization and activation via sequential autophosphorylation on tyrosine residues which act as docking sites for interacting proteins, leading to the activation of several signaling cascades. Binds to integrin ITGAV:ITGB3. Its binding to integrin, subsequent ternary complex formation with integrin and FGFR1, and the recruitment of PTPN11 to the complex are essential for FGF1 signaling. Induces the phosphorylation and activation of FGFR1, FRS2, MAPK3/ERK1, MAPK1/ERK2 and AKT1. Can induce angiogenesis. The polypeptide is Fibroblast growth factor 1 (FGF1) (Homo sapiens (Human)).